A 227-amino-acid polypeptide reads, in one-letter code: AN1-type zinc finger protein 3 (227 aa).

An A20-type zinc finger spans residues 12–44 (PSLPPRCPCGFWGSSKTMNLCSKCFADFQKKQP). 4 residues coordinate Zn(2+): Cys-18, Cys-20, Cys-32, and Cys-35. The interval 41–151 (KKQPDDDSTP…RPEESGRSKQ (111 aa)) is disordered. 2 stretches are compositionally biased toward low complexity: residues 49-59 (TPSTSNSQSDL) and 66-77 (SDNNNTSVTTPT). 2 stretches are compositionally biased toward polar residues: residues 78-94 (LSPS…VTSP) and 111-127 (ITPT…SESE). Basic and acidic residues predominate over residues 135–148 (RLVENPERPEESGR). An AN1-type zinc finger spans residues 151 to 200 (QKSRRRCFQCQTKLELVQQELGSCRCGYVFCMLHRLPEQHDCTFDHMGRG). Positions 157, 160, 174, 176, 181, 184, 190, and 192 each coordinate Zn(2+).

The sequence is that of AN1-type zinc finger protein 3 (Zfand3) from Rattus norvegicus (Rat).